Reading from the N-terminus, the 602-residue chain is Exopolysaccharide phosphotransferase SCO2594 (602 aa).

Residues 251–271 (PRAGEDLDAGDGAAGGPRPGL) form a disordered region.

It belongs to the stealth family.

This chain is Exopolysaccharide phosphotransferase SCO2594, found in Streptomyces coelicolor (strain ATCC BAA-471 / A3(2) / M145).